Here is a 687-residue protein sequence, read N- to C-terminus: Epithelial splicing regulatory protein 1 (687 aa).

RRM domains are found at residues 226–303, 327–407, and 446–526; these read TIIR…KATG, VIVR…RSTA, and DCIR…QCSA.

Belongs to the ESRP family.

It is found in the nucleus. Its function is as follows. mRNA splicing factor that regulates the formation of epithelial cell-specific isoforms. Specifically regulates the expression of FGFR2-IIIb, an epithelial cell-specific isoform of fgfr2. Acts by directly binding specific sequences in mRNAs. Binds the GU-rich sequence motifs in the ISE/ISS-3, a cis-element regulatory region present in the mRNA of fgfr2. In Xenopus tropicalis (Western clawed frog), this protein is Epithelial splicing regulatory protein 1 (esrp1).